The primary structure comprises 445 residues: Exodeoxyribonuclease 7 large subunit (445 aa).

Belongs to the XseA family. In terms of assembly, heterooligomer composed of large and small subunits.

The protein resides in the cytoplasm. It carries out the reaction Exonucleolytic cleavage in either 5'- to 3'- or 3'- to 5'-direction to yield nucleoside 5'-phosphates.. Its function is as follows. Bidirectionally degrades single-stranded DNA into large acid-insoluble oligonucleotides, which are then degraded further into small acid-soluble oligonucleotides. The protein is Exodeoxyribonuclease 7 large subunit of Shewanella oneidensis (strain ATCC 700550 / JCM 31522 / CIP 106686 / LMG 19005 / NCIMB 14063 / MR-1).